The sequence spans 152 residues: UPF0178 protein KPN78578_03210 (152 aa).

The protein belongs to the UPF0178 family.

This Klebsiella pneumoniae subsp. pneumoniae (strain ATCC 700721 / MGH 78578) protein is UPF0178 protein KPN78578_03210.